The chain runs to 122 residues: Large ribosomal subunit protein uL14 (122 aa).

Belongs to the universal ribosomal protein uL14 family. As to quaternary structure, part of the 50S ribosomal subunit. Forms a cluster with proteins L3 and L19. In the 70S ribosome, L14 and L19 interact and together make contacts with the 16S rRNA in bridges B5 and B8.

In terms of biological role, binds to 23S rRNA. Forms part of two intersubunit bridges in the 70S ribosome. The protein is Large ribosomal subunit protein uL14 of Picosynechococcus sp. (strain ATCC 27264 / PCC 7002 / PR-6) (Agmenellum quadruplicatum).